We begin with the raw amino-acid sequence, 198 residues long: NAD(P)H dehydrogenase (quinone) (198 aa).

The 186-residue stretch at 4–189 (ILVLYYSMYG…SIARYQGEYV (186 aa)) folds into the Flavodoxin-like domain. FMN contacts are provided by residues 10 to 15 (SMYGHI) and 78 to 80 (TRF). Y12 contacts NAD(+). W98 serves as a coordination point for substrate. Residues 113-118 (STGTGG) and H133 contribute to the FMN site.

Belongs to the WrbA family. FMN serves as cofactor.

It carries out the reaction a quinone + NADH + H(+) = a quinol + NAD(+). The enzyme catalyses a quinone + NADPH + H(+) = a quinol + NADP(+). This chain is NAD(P)H dehydrogenase (quinone), found in Salmonella typhi.